The following is an 879-amino-acid chain: Protein P (879 aa).

The terminal protein domain (TP) stretch occupies residues 1–184 (MHPFSRLFRN…GKPYSWEHRQ (184 aa)). The interval 185 to 382 (LVQHNGQQHK…YCIHHIVSSI (198 aa)) is spacer. Residues 304-345 (SASNSNKSRSREKAYSSNSTSKRYSPPLNYEKSDFSSPGVRG) are disordered. The interval 383 to 724 (DDWGPCTVTG…YEELWPVVRQ (342 aa)) is polymerase/reverse transcriptase domain (RT). One can recognise a Reverse transcriptase domain in the interval 393-634 (DVTIKSPRTP…NHLHFMGYVI (242 aa)). Residues aspartate 465, aspartate 585, and aspartate 586 each coordinate Mg(2+).

Belongs to the hepadnaviridae P protein family.

It carries out the reaction DNA(n) + a 2'-deoxyribonucleoside 5'-triphosphate = DNA(n+1) + diphosphate. The enzyme catalyses Endonucleolytic cleavage to 5'-phosphomonoester.. With respect to regulation, activated by host HSP70 and HSP40 in vitro to be able to bind the epsilon loop of the pgRNA. Because deletion of the RNase H region renders the protein partly chaperone-independent, the chaperones may be needed indirectly to relieve occlusion of the RNA-binding site by this domain. Inhibited by several reverse-transcriptase inhibitors: Lamivudine, Adefovir and Entecavir. Its function is as follows. Multifunctional enzyme that converts the viral RNA genome into dsDNA in viral cytoplasmic capsids. This enzyme displays a DNA polymerase activity that can copy either DNA or RNA templates, and a ribonuclease H (RNase H) activity that cleaves the RNA strand of RNA-DNA heteroduplexes in a partially processive 3'- to 5'-endonucleasic mode. Neo-synthesized pregenomic RNA (pgRNA) are encapsidated together with the P protein, and reverse-transcribed inside the nucleocapsid. Initiation of reverse-transcription occurs first by binding the epsilon loop on the pgRNA genome, and is initiated by protein priming, thereby the 5'-end of (-)DNA is covalently linked to P protein. Partial (+)DNA is synthesized from the (-)DNA template and generates the relaxed circular DNA (RC-DNA) genome. After budding and infection, the RC-DNA migrates in the nucleus, and is converted into a plasmid-like covalently closed circular DNA (cccDNA). The activity of P protein does not seem to be necessary for cccDNA generation, and is presumably released from (+)DNA by host nuclear DNA repair machinery. The protein is Protein P of Woodchuck hepatitis B virus (isolate 1) (WHV).